A 254-amino-acid polypeptide reads, in one-letter code: tRNA (guanine-N(7)-)-methyltransferase (254 aa).

Positions 1-34 (MNTNTPAHPPEGAPLSEATQAALASAEHAPDSPG) are disordered. Residues Glu-87, Glu-112, Asp-139, and Asp-162 each contribute to the S-adenosyl-L-methionine site. Residue Asp-162 is part of the active site. Residues Lys-166, Asp-198, and 233-236 (TKFE) each bind substrate.

The protein belongs to the class I-like SAM-binding methyltransferase superfamily. TrmB family.

It catalyses the reaction guanosine(46) in tRNA + S-adenosyl-L-methionine = N(7)-methylguanosine(46) in tRNA + S-adenosyl-L-homocysteine. Its pathway is tRNA modification; N(7)-methylguanine-tRNA biosynthesis. Its function is as follows. Catalyzes the formation of N(7)-methylguanine at position 46 (m7G46) in tRNA. This is tRNA (guanine-N(7)-)-methyltransferase from Bordetella bronchiseptica (strain ATCC BAA-588 / NCTC 13252 / RB50) (Alcaligenes bronchisepticus).